We begin with the raw amino-acid sequence, 363 residues long: Peptide chain release factor 2 (363 aa).

The residue at position 251 (Gln251) is an N5-methylglutamine.

Belongs to the prokaryotic/mitochondrial release factor family. Methylated by PrmC. Methylation increases the termination efficiency of RF2.

It localises to the cytoplasm. In terms of biological role, peptide chain release factor 2 directs the termination of translation in response to the peptide chain termination codons UGA and UAA. The polypeptide is Peptide chain release factor 2 (Helicobacter pylori (strain P12)).